Reading from the N-terminus, the 397-residue chain is Proteasome-activating nucleotidase (397 aa).

A coiled-coil region spans residues 12–58; that stretch reads GYEDYITFLKRRIRQLELQVRTLEADKERLERELSRLRTEMSRLRQP. ATP contacts are provided by residues 182 to 187 and His-321; that span reads GCGKTL. Residues 395–397 form a docks into pockets in the proteasome alpha-ring to cause gate opening region; the sequence is MYG.

Belongs to the AAA ATPase family. In terms of assembly, homohexamer. The hexameric complex has a two-ring architecture resembling a top hat that caps the 20S proteasome core at one or both ends. Upon ATP-binding, the C-terminus of PAN interacts with the alpha-rings of the proteasome core by binding to the intersubunit pockets.

It localises to the cytoplasm. ATPase which is responsible for recognizing, binding, unfolding and translocation of substrate proteins into the archaeal 20S proteasome core particle. Is essential for opening the gate of the 20S proteasome via an interaction with its C-terminus, thereby allowing substrate entry and access to the site of proteolysis. Thus, the C-termini of the proteasomal ATPase function like a 'key in a lock' to induce gate opening and therefore regulate proteolysis. Unfolding activity requires energy from ATP hydrolysis, whereas ATP binding alone promotes ATPase-20S proteasome association which triggers gate opening, and supports translocation of unfolded substrates. The sequence is that of Proteasome-activating nucleotidase from Thermococcus gammatolerans (strain DSM 15229 / JCM 11827 / EJ3).